Here is a 715-residue protein sequence, read N- to C-terminus: Methionine--tRNA ligase (715 aa).

The 'HIGH' region signature appears at 17-27 (PYANGPIHLGH). Positions 148, 151, 161, and 164 each coordinate Zn(2+). Residues 359-363 (KMSKS) carry the 'KMSKS' region motif. Residue lysine 362 coordinates ATP. The tRNA-binding domain occupies 614-715 (DLSKVELRVG…KDAKPGDRLK (102 aa)).

The protein belongs to the class-I aminoacyl-tRNA synthetase family. MetG type 1 subfamily. In terms of assembly, homodimer. It depends on Zn(2+) as a cofactor.

It localises to the cytoplasm. It carries out the reaction tRNA(Met) + L-methionine + ATP = L-methionyl-tRNA(Met) + AMP + diphosphate. Is required not only for elongation of protein synthesis but also for the initiation of all mRNA translation through initiator tRNA(fMet) aminoacylation. In Leptospira interrogans serogroup Icterohaemorrhagiae serovar Lai (strain 56601), this protein is Methionine--tRNA ligase.